The sequence spans 265 residues: Adenosine 5'-phosphosulfate reductase (265 aa).

Residues cysteine 135, cysteine 136, cysteine 218, and cysteine 221 each coordinate [4Fe-4S] cluster. The active-site Nucleophile; cysteine thiosulfonate intermediate is cysteine 246.

It belongs to the PAPS reductase family. CysH subfamily. The cofactor is [4Fe-4S] cluster.

Its subcellular location is the cytoplasm. The enzyme catalyses [thioredoxin]-disulfide + sulfite + AMP + 2 H(+) = adenosine 5'-phosphosulfate + [thioredoxin]-dithiol. It participates in sulfur metabolism; hydrogen sulfide biosynthesis; sulfite from sulfate. In terms of biological role, catalyzes the formation of sulfite from adenosine 5'-phosphosulfate (APS) using thioredoxin as an electron donor. The chain is Adenosine 5'-phosphosulfate reductase from Rhizobium meliloti (strain 1021) (Ensifer meliloti).